Consider the following 128-residue polypeptide: Protein FAM229A (128 aa).

The disordered stretch occupies residues 1–96 (MQSSPSTLGP…VATDQNPVRP (96 aa)).

This sequence belongs to the FAM229 family.

In Mus musculus (Mouse), this protein is Protein FAM229A (Fam229a).